Here is a 1042-residue protein sequence, read N- to C-terminus: MLNQNLTISQEIAAQPKTQYFTKEDGDALANLLESNPYKEQAVEVKSLLKSERLIESSRVEPEVDWFYCKLGLDSNYFDSTPSIVIARHILSLYAAKMVSHATGAKLEVHLHSKNEGSATFITPSNPGKRDSPAMMIEHAIESHYFGEGYHQDQQLLSPQQVAVAPFPVSPKPPTGTNLPPHGFRLACYRTTGTVSNSSPVHLRLYYLTKPVFPQATNDLSASKNDEILATETDLFKIGDISFIEKSSELTKKIYQEVMNEVVGKQGPVIKHYPYQTNGARLVIAYRRGSTHSYWSAIGELYHFHQMYATHKYVEQFSNGITIYSIYLRPLHPDVDINTKISKIAEQASLVYVLPRTSLTPLFLSHQLSFPEVTYAYVCWKFAYQFLNRYATEYSALAAAIGDDSTKQSMLAQLKTRLSKDTFTEGRVRDAVLQYPELIKILYQDFEKFHFSGSNSNNTQKYDVQHGSEILASIKKTVNNELDSQIFSAILSFNRHLLKTNFYKQTKTALSFRLDPGFLSTKEYVSTPYAVFFVVGSEFRGFHIRFRDISRGGIRIIRSGNSTQYDHNSSSLFDENYNLANTQQSKNKDIAEGGSKGTILLSADHQSKAEVAFHKYIDGLLDLLLPNHEIVDHFAKPEILFLGPDEGTADFMNWASSHAKDRGAHFWKAFTTGKSLSRGGIPHDLYGMTTRSIHQYVLGTLAKLGRNEADCTKFQTGGPDGDLGSNEIKISKDKTIGIVDGSGVLLDPQGLNRDEIGRLASKRQMARYFDKSKLSPQGFFVDVAENDVKLPNGDIVESGLIFRNNFHLNPLCNADIFVPCGGRPESVQLTNVDKMFTATGESRFPIIVEGANLFFTQKARLMIEEKGAIIFKDASANKGGVTSSSLEVLAALALNDEEFDRHMCVKDNVVPEFYENYIKDVHHTIESNARLEFECIWSEHESTKTPRSILSDLLSNKINSLNDSIQTSSLWTDQSLRRKIISAACPKVLLNLLGVDKIMERVPEPYVKAIFGSYLASRFVYKYGLNSNEFAFYTYMETLKQQ.

Residue K596 is part of the active site. R763 carries the ADP-ribosylarginine; by Legionella Lart1 modification.

It belongs to the Glu/Leu/Phe/Val dehydrogenases family. In terms of assembly, homodimer. Post-translationally, (Microbial infection) ADP-ribosylated at Arg-763 by the Legionella pneumophila effector Lart1, which inhibits the glutamate dehydrogenase activity. Amoeba are natural hosts of Legionella, and ADP-ribosylation by Lart1 may promote Legionella parasitism.

The protein resides in the cytoplasm. The catalysed reaction is L-glutamate + NAD(+) + H2O = 2-oxoglutarate + NH4(+) + NADH + H(+). Activity is stimulated by AMP. With respect to regulation, (Microbial infection) Inhibited by ADP-ribosylation. In Dictyostelium discoideum (Social amoeba), this protein is Glutamate dehydrogenase 2 (glud2).